A 546-amino-acid chain; its full sequence is Carotenoid 9,10(9',10')-cleavage dioxygenase (546 aa).

The Fe cation site is built by His-226, His-274, His-340, and His-530.

Belongs to the carotenoid oxygenase family. It depends on Fe(2+) as a cofactor. As to expression, in vegetative and floral tissues.

The protein resides in the cytoplasm. The enzyme catalyses all-trans-zeaxanthin + 2 O2 = 4,9-dimethyldodeca-2,4,6,8,10-pentaenedial + 2 (3R)-hydroxy-beta-ionone. Cleaves a variety of carotenoids symmetrically at both the 9-10 and 9'-10' double bonds. Catalyzes the formation of 4,9-dimethyldodeca-2,4,6,8,10-pentaene-1,12-dialdehyde and probably hydroxydihydro-beta-ionone from zeaxanthin. In Crocus sativus (Saffron), this protein is Carotenoid 9,10(9',10')-cleavage dioxygenase (CCD).